The primary structure comprises 474 residues: tRNA-2-methylthio-N(6)-dimethylallyladenosine synthase (474 aa).

In terms of domain architecture, MTTase N-terminal spans 3 to 120 (KKLHIKTWGC…LPEMINSVRG (118 aa)). [4Fe-4S] cluster-binding residues include cysteine 12, cysteine 49, cysteine 83, cysteine 157, cysteine 161, and cysteine 164. Residues 143–375 (RAEGPTAFVS…QERINQQAMA (233 aa)) form the Radical SAM core domain. The 64-residue stretch at 378–441 (RRMLGTTQRI…PNSLRGKVVR (64 aa)) folds into the TRAM domain.

Belongs to the methylthiotransferase family. MiaB subfamily. In terms of assembly, monomer. Requires [4Fe-4S] cluster as cofactor.

Its subcellular location is the cytoplasm. It catalyses the reaction N(6)-dimethylallyladenosine(37) in tRNA + (sulfur carrier)-SH + AH2 + 2 S-adenosyl-L-methionine = 2-methylsulfanyl-N(6)-dimethylallyladenosine(37) in tRNA + (sulfur carrier)-H + 5'-deoxyadenosine + L-methionine + A + S-adenosyl-L-homocysteine + 2 H(+). Functionally, catalyzes the methylthiolation of N6-(dimethylallyl)adenosine (i(6)A), leading to the formation of 2-methylthio-N6-(dimethylallyl)adenosine (ms(2)i(6)A) at position 37 in tRNAs that read codons beginning with uridine. The sequence is that of tRNA-2-methylthio-N(6)-dimethylallyladenosine synthase from Salmonella enteritidis PT4 (strain P125109).